The sequence spans 226 residues: Putative ankyrin repeat protein RF_0939 (226 aa).

ANK repeat units lie at residues 56–86, 91–120, 125–154, and 157–194; these read VSTTELFLASSNNALKVAEWLVETKKANVNM, FKDTPLNSAARHGSYKVAEYLIAKGAAVNG, LLGPPLYEAVSGKYLNVAKLLLEKGAAVDQ, and SGETPLHAVAKNVRYTSKDIKDDEIYKLLVSYGADTNA.

The protein is Putative ankyrin repeat protein RF_0939 of Rickettsia felis (strain ATCC VR-1525 / URRWXCal2) (Rickettsia azadi).